Reading from the N-terminus, the 151-residue chain is MGFFSGEYDCTVDAKGRMVLPARIKSNLPDIDAGNVVLTRGFESCIVLYSQTEFKKIYSKVSGLNEFSEEYRVFQRNFFRGINEVELDSNGRLLIPKMLMAHAQLEKDITVVGMGNRVEIWSPDLYQKFLIQDSSEFAQLAEKYLAPTKKE.

SpoVT-AbrB domains are found at residues 7–53 (EYDC…SQTE) and 82–125 (INEV…SPDL).

This sequence belongs to the MraZ family. As to quaternary structure, forms oligomers.

It is found in the cytoplasm. It localises to the nucleoid. The chain is Transcriptional regulator MraZ from Cytophaga hutchinsonii (strain ATCC 33406 / DSM 1761 / CIP 103989 / NBRC 15051 / NCIMB 9469 / D465).